The following is a 1004-amino-acid chain: 2-oxoglutarate dehydrogenase E1 component (1004 aa).

It belongs to the alpha-ketoglutarate dehydrogenase family. Homodimer. Part of the 2-oxoglutarate dehydrogenase (OGDH) complex composed of E1 (2-oxoglutarate dehydrogenase), E2 (dihydrolipoamide succinyltransferase) and E3 (dihydrolipoamide dehydrogenase); the complex contains multiple copies of the three enzymatic components (E1, E2 and E3). It depends on thiamine diphosphate as a cofactor.

It carries out the reaction N(6)-[(R)-lipoyl]-L-lysyl-[protein] + 2-oxoglutarate + H(+) = N(6)-[(R)-S(8)-succinyldihydrolipoyl]-L-lysyl-[protein] + CO2. E1 component of the 2-oxoglutarate dehydrogenase (OGDH) complex which catalyzes the decarboxylation of 2-oxoglutarate, the first step in the conversion of 2-oxoglutarate to succinyl-CoA and CO(2). This chain is 2-oxoglutarate dehydrogenase E1 component, found in Brucella suis biovar 1 (strain 1330).